The following is a 116-amino-acid chain: Phosphoribosyl-AMP cyclohydrolase (116 aa).

Residue D78 coordinates Mg(2+). C79 contacts Zn(2+). Mg(2+) contacts are provided by D80 and D82. Zn(2+) is bound by residues C95 and C102.

Belongs to the PRA-CH family. As to quaternary structure, homodimer. It depends on Mg(2+) as a cofactor. The cofactor is Zn(2+).

Its subcellular location is the cytoplasm. The enzyme catalyses 1-(5-phospho-beta-D-ribosyl)-5'-AMP + H2O = 1-(5-phospho-beta-D-ribosyl)-5-[(5-phospho-beta-D-ribosylamino)methylideneamino]imidazole-4-carboxamide. Its pathway is amino-acid biosynthesis; L-histidine biosynthesis; L-histidine from 5-phospho-alpha-D-ribose 1-diphosphate: step 3/9. In terms of biological role, catalyzes the hydrolysis of the adenine ring of phosphoribosyl-AMP. This chain is Phosphoribosyl-AMP cyclohydrolase, found in Acidiphilium cryptum (strain JF-5).